Reading from the N-terminus, the 182-residue chain is Protein canopy homolog 2 (182 aa).

The first 20 residues, 1–20 (MKGWGWLALLLGVLLGTAWA), serve as a signal peptide directing secretion. The Saposin B-type domain occupies 24–175 (QDLHCGACRA…KRTDLCDHAL (152 aa)). Intrachain disulfides connect Cys28–Cys171, Cys31–Cys164, and Cys86–Cys137. The residue at position 115 (Ser115) is a Phosphoserine. The Prevents secretion from ER signature appears at 179-182 (HDEL).

It belongs to the canopy family. As to quaternary structure, interacts with MYLIP/MIR.

The protein localises to the endoplasmic reticulum. Functionally, positive regulator of neurite outgrowth by stabilizing myosin regulatory light chain (MRLC). It prevents MIR-mediated MRLC ubiquitination and its subsequent proteasomal degradation. The chain is Protein canopy homolog 2 (Cnpy2) from Mus musculus (Mouse).